Consider the following 100-residue polypeptide: NADH-quinone oxidoreductase subunit K (100 aa).

3 helical membrane-spanning segments follow: residues 4–24 (LQHG…GLLI), 28–48 (LLFM…AFVV), and 60–80 (VMYI…LALL).

It belongs to the complex I subunit 4L family. In terms of assembly, NDH-1 is composed of 13 different subunits. Subunits NuoA, H, J, K, L, M, N constitute the membrane sector of the complex.

It localises to the cell inner membrane. The catalysed reaction is a quinone + NADH + 5 H(+)(in) = a quinol + NAD(+) + 4 H(+)(out). Functionally, NDH-1 shuttles electrons from NADH, via FMN and iron-sulfur (Fe-S) centers, to quinones in the respiratory chain. The immediate electron acceptor for the enzyme in this species is believed to be ubiquinone. Couples the redox reaction to proton translocation (for every two electrons transferred, four hydrogen ions are translocated across the cytoplasmic membrane), and thus conserves the redox energy in a proton gradient. The chain is NADH-quinone oxidoreductase subunit K from Edwardsiella ictaluri (strain 93-146).